A 92-amino-acid chain; its full sequence is Acylphosphatase (92 aa).

An Acylphosphatase-like domain is found at 3-92; the sequence is TKHVLVSGIV…GPRSTHFEVT (90 aa). Active-site residues include Arg-18 and Asn-36.

The protein belongs to the acylphosphatase family.

The enzyme catalyses an acyl phosphate + H2O = a carboxylate + phosphate + H(+). This Alcanivorax borkumensis (strain ATCC 700651 / DSM 11573 / NCIMB 13689 / SK2) protein is Acylphosphatase (acyP).